The sequence spans 334 residues: Biotin synthase (334 aa).

Residues 55 to 285 (GSSGSIHACS…VHPRKIIKIA (231 aa)) form the Radical SAM core domain. Positions 73, 77, and 80 each coordinate [4Fe-4S] cluster. [2Fe-2S] cluster is bound by residues Cys-152, Cys-213, and Lys-283.

The protein belongs to the radical SAM superfamily. Biotin synthase family. Homodimer. [4Fe-4S] cluster serves as cofactor. Requires [2Fe-2S] cluster as cofactor.

The enzyme catalyses (4R,5S)-dethiobiotin + (sulfur carrier)-SH + 2 reduced [2Fe-2S]-[ferredoxin] + 2 S-adenosyl-L-methionine = (sulfur carrier)-H + biotin + 2 5'-deoxyadenosine + 2 L-methionine + 2 oxidized [2Fe-2S]-[ferredoxin]. It functions in the pathway cofactor biosynthesis; biotin biosynthesis; biotin from 7,8-diaminononanoate: step 2/2. Catalyzes the conversion of dethiobiotin (DTB) to biotin by the insertion of a sulfur atom into dethiobiotin via a radical-based mechanism. This is Biotin synthase from Chlorobium phaeobacteroides (strain DSM 266 / SMG 266 / 2430).